Reading from the N-terminus, the 1495-residue chain is DNA-directed RNA polymerase subunit 1 (1495 aa).

This sequence belongs to the RNA polymerase beta' chain family.

The protein resides in the virion. The catalysed reaction is RNA(n) + a ribonucleoside 5'-triphosphate = RNA(n+1) + diphosphate. In terms of biological role, DNA-dependent RNA polymerase catalyzes the transcription of DNA into RNA using the four ribonucleoside triphosphates as substrates. This Acanthamoeba polyphaga (Amoeba) protein is DNA-directed RNA polymerase subunit 1 (RPO1).